The sequence spans 26 residues: Potassium channel toxin alpha-KTx6 OcyKTx1 (26 aa).

Cys-3 and Cys-24 are joined by a disulfide.

It belongs to the short scorpion toxin superfamily. Potassium channel inhibitor family. Alpha-KTx 06 subfamily. In terms of tissue distribution, expressed by the venom gland.

It is found in the secreted. In terms of biological role, blocks voltage-gated potassium channels. The sequence is that of Potassium channel toxin alpha-KTx6 OcyKTx1 from Opisthacanthus cayaporum (South American scorpion).